Here is a 447-residue protein sequence, read N- to C-terminus: C4-dicarboxylate transport protein (447 aa).

The next 9 helical transmembrane spans lie at 13–33 (SLYF…HYWP), 49–69 (LIKM…IAGM), 81–101 (LALL…LLIV), 149–169 (AFAK…GFAL), 189–209 (VLFA…FGAM), 227–247 (LMGT…GLIA), 302–322 (GYSF…VFIA), 336–356 (TLLA…GSGF), and 357–377 (IVLA…LALI). Residues 422 to 447 (ETEAEANEPEAVLDEIDQHMPVPAAR) form a disordered region. Acidic residues predominate over residues 425–436 (AEANEPEAVLDE).

It belongs to the dicarboxylate/amino acid:cation symporter (DAACS) (TC 2.A.23) family.

Its subcellular location is the cell inner membrane. Responsible for the transport of dicarboxylates such as succinate, fumarate, and malate from the periplasm across the membrane. The sequence is that of C4-dicarboxylate transport protein from Leptothrix cholodnii (strain ATCC 51168 / LMG 8142 / SP-6) (Leptothrix discophora (strain SP-6)).